A 278-amino-acid chain; its full sequence is Sulfur carrier protein FdhD (278 aa).

The Cysteine persulfide intermediate role is filled by cysteine 121. 260 to 265 (FCKPGR) is a Mo-bis(molybdopterin guanine dinucleotide) binding site.

This sequence belongs to the FdhD family.

The protein localises to the cytoplasm. Functionally, required for formate dehydrogenase (FDH) activity. Acts as a sulfur carrier protein that transfers sulfur from IscS to the molybdenum cofactor prior to its insertion into FDH. This chain is Sulfur carrier protein FdhD, found in Salmonella paratyphi A (strain ATCC 9150 / SARB42).